Consider the following 251-residue polypeptide: B3 domain-containing protein REM7 (251 aa).

DNA-binding regions (TF-B3) lie at residues Asn-11–Ser-103 and Cys-170–Asn-251.

The protein localises to the nucleus. This is B3 domain-containing protein REM7 (REM7) from Arabidopsis thaliana (Mouse-ear cress).